A 445-amino-acid chain; its full sequence is Aminopeptidase C (445 aa).

Catalysis depends on residues C69, H363, and N385.

Belongs to the peptidase C1 family. As to quaternary structure, homohexamer.

It catalyses the reaction Inactivates bleomycin B2 (a cytotoxic glycometallopeptide) by hydrolysis of a carboxyamide bond of beta-aminoalanine, but also shows general aminopeptidase activity. The specificity varies somewhat with source, but amino acid arylamides of Met, Leu and Ala are preferred.. The sequence is that of Aminopeptidase C (pepC) from Streptococcus thermophilus.